The sequence spans 353 residues: Type 2 DNA topoisomerase 6 subunit A (353 aa).

Residues 2–138 form the Topo IIA-type catalytic domain; it reads NRREIAINKL…LGLMPEEDGA (137 aa). Catalysis depends on Tyr96, which acts as the O-(5'-phospho-DNA)-tyrosine intermediate. Mg(2+)-binding residues include Glu186 and Asp238.

This sequence belongs to the TOP6A family. In terms of assembly, homodimer. Heterotetramer of two Top6A and two Top6B chains. Requires Mg(2+) as cofactor.

The enzyme catalyses ATP-dependent breakage, passage and rejoining of double-stranded DNA.. Relaxes both positive and negative superturns and exhibits a strong decatenase activity. In Methanothermobacter thermautotrophicus (strain ATCC 29096 / DSM 1053 / JCM 10044 / NBRC 100330 / Delta H) (Methanobacterium thermoautotrophicum), this protein is Type 2 DNA topoisomerase 6 subunit A.